The following is a 161-amino-acid chain: Nucleotide-binding protein lpg1167 (161 aa).

This sequence belongs to the YajQ family.

In terms of biological role, nucleotide-binding protein. This chain is Nucleotide-binding protein lpg1167, found in Legionella pneumophila subsp. pneumophila (strain Philadelphia 1 / ATCC 33152 / DSM 7513).